The chain runs to 346 residues: Superficial pseudohyphal growth protein 1 (346 aa).

The segment at 289 to 308 (NFGEDEDNEEDNEDDLPDAA) is disordered. The segment covering 291–305 (GEDEDNEEDNEDDLP) has biased composition (acidic residues).

It is found in the nucleus. Its function is as follows. Probable transcription factor required for superficial pseudohyphal development in response to nitrogen starvation. The sequence is that of Superficial pseudohyphal growth protein 1 (SFG1) from Saccharomyces cerevisiae (strain ATCC 204508 / S288c) (Baker's yeast).